Here is a 116-residue protein sequence, read N- to C-terminus: U30-theraphotoxin-Cg1a (116 aa).

The N-terminal stretch at 1-17 is a signal peptide; that stretch reads MKLCVLTIASLLVTVTS. Positions 18 to 53 are excised as a propeptide; it reads LETQKEIAEGSELTREETPSLVEHKEDEAAAASEKR. The interval 24–46 is disordered; the sequence is IAEGSELTREETPSLVEHKEDEA. Intrachain disulfides connect Cys55–Cys69, Cys62–Cys75, Cys66–Cys112, and Cys68–Cys88.

This sequence belongs to the neurotoxin 03 (Tx2) family. 02 subfamily. HNTX-XV sub-subfamily. Expressed by the venom gland.

Its subcellular location is the secreted. In terms of biological role, probable ion channel inhibitor. In Chilobrachys guangxiensis (Chinese earth tiger tarantula), this protein is U30-theraphotoxin-Cg1a.